Here is a 253-residue protein sequence, read N- to C-terminus: Probable transcriptional regulatory protein TM_0466 (253 aa).

It belongs to the TACO1 family.

The protein resides in the cytoplasm. In Thermotoga maritima (strain ATCC 43589 / DSM 3109 / JCM 10099 / NBRC 100826 / MSB8), this protein is Probable transcriptional regulatory protein TM_0466.